The following is a 181-amino-acid chain: Virion protein 3 (181 aa).

This sequence belongs to the tevenvirinae baseplate structural protein gp8 family.

The protein resides in the virion. Functionally, putative baseplate protein. In Enterococcus faecalis (Streptococcus faecalis), this protein is Virion protein 3.